The following is a 61-amino-acid chain: Small ribosomal subunit protein uS14 (61 aa).

Zn(2+) is bound by residues C24, C27, C40, and C43.

The protein belongs to the universal ribosomal protein uS14 family. Zinc-binding uS14 subfamily. Part of the 30S ribosomal subunit. Contacts proteins S3 and S10. Requires Zn(2+) as cofactor.

Binds 16S rRNA, required for the assembly of 30S particles and may also be responsible for determining the conformation of the 16S rRNA at the A site. The protein is Small ribosomal subunit protein uS14 of Clostridium perfringens (strain ATCC 13124 / DSM 756 / JCM 1290 / NCIMB 6125 / NCTC 8237 / Type A).